Consider the following 744-residue polypeptide: Catalase A (744 aa).

Active-site residues include histidine 93 and asparagine 166. Tyrosine 380 contributes to the heme binding site.

Belongs to the catalase family. Heme is required as a cofactor.

The protein localises to the peroxisome matrix. It catalyses the reaction 2 H2O2 = O2 + 2 H2O. Catalyzes the degradation of hydrogen peroxide (H(2)O(2)) generated by peroxisomal oxidases to water and oxygen, thereby protecting cells from the toxic effects of hydrogen peroxide. This is Catalase A (catA) from Emericella nidulans (strain FGSC A4 / ATCC 38163 / CBS 112.46 / NRRL 194 / M139) (Aspergillus nidulans).